Consider the following 217-residue polypeptide: Phosphate-specific transport system accessory protein PhoU homolog 2 (217 aa).

This sequence belongs to the PhoU family. In terms of assembly, homodimer.

It localises to the cytoplasm. In terms of biological role, plays a role in the regulation of phosphate uptake. The protein is Phosphate-specific transport system accessory protein PhoU homolog 2 of Methanothermobacter thermautotrophicus (strain ATCC 29096 / DSM 1053 / JCM 10044 / NBRC 100330 / Delta H) (Methanobacterium thermoautotrophicum).